The sequence spans 127 residues: Small ribosomal subunit protein uS11 (127 aa).

This sequence belongs to the universal ribosomal protein uS11 family. Part of the 30S ribosomal subunit. Interacts with proteins S7 and S18. Binds to IF-3.

Located on the platform of the 30S subunit, it bridges several disparate RNA helices of the 16S rRNA. Forms part of the Shine-Dalgarno cleft in the 70S ribosome. This chain is Small ribosomal subunit protein uS11, found in Rickettsia bellii (strain RML369-C).